A 678-amino-acid chain; its full sequence is Sulfoquinovosidase (678 aa).

Residues Gln288, Arg301, Val302, and Trp304 each coordinate a 6-sulfo-alpha-D-quinovosyldiacylglycerol. Asp405 acts as the Nucleophile in catalysis. Glu408 is an active-site residue. The active-site Proton donor is the Asp472. Position 537 (His537) interacts with a 6-sulfo-alpha-D-quinovosyldiacylglycerol.

This sequence belongs to the glycosyl hydrolase 31 family.

It carries out the reaction a 6-sulfo-alpha-D-quinovosyldiacylglycerol + H2O = 6-sulfo-alpha-D-quinovose + a 1,2-diacyl-sn-glycerol. The catalysed reaction is 3-(6-sulfo-alpha-D-quinovosyl)glycerol + H2O = 6-sulfo-alpha-D-quinovose + glycerol. The protein operates within glycolipid metabolism. With respect to regulation, is inactivated in vitro by the mechanism-based inactivator 5-fluoro-beta-L-idopyranosyl fluoride (5FIdoF) that yields a covalent glycosyl-enzyme complex with the active site nucleophile Asp-405. Its function is as follows. Catalyzes the hydrolysis of sulfoquinovosyl diacylglycerides (SQDG) to sulfoquinovose (SQ), which is then degraded by E.coli through the SQ Embden-Meyerhof-Parnas (SQ-EMP) sulfoglycolysis pathway as a source of carbon and sulfur. Therefore, is likely involved in the utilization of the sulfoquinovose headgroup found in ubiquitous plant sulfolipids. Is also able to hydrolyze simple sulfoquinovosides such as sulfoquinovosyl glycerol (SQGro). In vitro, can use the substrate analog para-nitrophenyl alpha-sulfoquinovoside (PNPSQ), but shows no detectable activity toward 4-nitrophenyl alpha-D-glucopyranoside (PNPGlc). Is a retaining glycoside hydrolase, since it forms the alpha anomer of SQ. Also exhibits some alpha-glucosidase activity against alpha-glucosyl fluoride in vitro, although natural substrates, such as alpha-glucobioses are scarcely hydrolyzed. This Escherichia coli (strain K12) protein is Sulfoquinovosidase.